Consider the following 226-residue polypeptide: MLHLVDFALLKPYLTVEEIVEGARKAERLGVAAYCVNPVYAAVVRPLLSRVKLCVVVDFPFGALPTAARASLASKLAEIAEELDVVAPIGLVKSRRWADVRRDLISVVGASGGRVVKVIVEEPYLTDEERYRLYDIVAESGAHFIKSSTGFAEEAYASRLGNPVHSTPERAAAIAKYIRERGYKLGVKMAGGIRTKEQARAIIEAIGFGEDPTRVRLGTSTPEALA.

Catalysis depends on D84, which acts as the Proton donor/acceptor. K146 acts as the Schiff-base intermediate with acetaldehyde in catalysis. The active-site Proton donor/acceptor is K188.

The protein belongs to the DeoC/FbaB aldolase family. DeoC type 1 subfamily.

It localises to the cytoplasm. It carries out the reaction 2-deoxy-D-ribose 5-phosphate = D-glyceraldehyde 3-phosphate + acetaldehyde. It participates in carbohydrate degradation; 2-deoxy-D-ribose 1-phosphate degradation; D-glyceraldehyde 3-phosphate and acetaldehyde from 2-deoxy-alpha-D-ribose 1-phosphate: step 2/2. Its function is as follows. Catalyzes a reversible aldol reaction between acetaldehyde and D-glyceraldehyde 3-phosphate to generate 2-deoxy-D-ribose 5-phosphate. The sequence is that of Deoxyribose-phosphate aldolase from Pyrobaculum arsenaticum (strain DSM 13514 / JCM 11321 / PZ6).